A 425-amino-acid polypeptide reads, in one-letter code: Nuclear pore complex-interacting protein family member B6 (425 aa).

A disordered region spans residues 332–414; the sequence is SPLPPSVDDN…RRLSKLRTRH (83 aa). Residues 353–395 show a composition bias toward basic and acidic residues; it reads EVEKPPKPKRWRVDEVEQSPKPKRRRVDEVEQSPKPKRQREAE. Basic residues predominate over residues 401 to 414; it reads KPKRRRLSKLRTRH.

This sequence belongs to the NPIP family.

This Homo sapiens (Human) protein is Nuclear pore complex-interacting protein family member B6 (NPIPB6).